The following is a 250-amino-acid chain: Developmental protein SEPALLATA 2 (250 aa).

The MADS-box domain occupies 3 to 57 (RGRVELKRIENKINRQVTFAKRRNGLLKKAYELSVLCDAEVSLIVFSNRGKLYEF). Residues 85–150 (AKELENSYRE…CIKTQYMLDQ (66 aa)) adopt a coiled-coil conformation. The K-box domain occupies 88 to 178 (LENSYREYLK…SMKLEDMIGV (91 aa)).

In terms of assembly, heterodimer with AGAMOUS capable of binding to CArG-box sequences. Interacts with TT16/AGL32.

The protein resides in the nucleus. Probable transcription factor. Functions with SEPALLATA1/AGL2 and SEPALLATA3/AGL9 to ensure proper development of petals, stamens and carpels and to prevent the indeterminate growth of the flower meristem. Forms a heterodimer via the K-box domain with AG, that could be involved in genes regulation during floral meristem development. The polypeptide is Developmental protein SEPALLATA 2 (SEP2) (Arabidopsis thaliana (Mouse-ear cress)).